The chain runs to 621 residues: Rab proteins geranylgeranyltransferase component A 2 (621 aa).

Residues 113–171 (VQDTETLQRSSPLEASATPADSLDSASLPKERQSAYSTSYEVPSRHTEESDRELSLPSA) form a disordered region. The span at 115–125 (DTETLQRSSPL) shows a compositional bias: polar residues. The span at 155-166 (PSRHTEESDREL) shows a compositional bias: basic and acidic residues.

The protein belongs to the Rab GDI family. In terms of assembly, monomer. Heterotrimer composed of RABGGTA, RABGGTB and CHML; within this trimer, RABGGTA and RABGGTB form the catalytic component B, while CHML (component A) mediates Rab protein binding. Interacts with RAB1A, RAB7A and RAB27A, but has much lower affinity for RAB1A, RAB7A and RAB27A than CHM. Interacts with the non-phosphorylated forms of RAB3A, RAB3B, RAB3C, RAB3D, RAB5B, RAB5C, RAB8A, RAB8B, RAB10, RAB12, RAB35, and RAB43.

The protein resides in the cytoplasm. It localises to the cytosol. Its function is as follows. Substrate-binding subunit (component A) of the Rab geranylgeranyltransferase (GGTase) complex. Binds unprenylated Rab proteins and presents the substrate peptide to the catalytic component B. The component A is thought to be regenerated by transferring its prenylated Rab back to the donor membrane. Less effective than CHM in supporting prenylation of Rab3 family. This chain is Rab proteins geranylgeranyltransferase component A 2 (Chml), found in Mus musculus (Mouse).